A 130-amino-acid polypeptide reads, in one-letter code: Small ribosomal subunit protein uS8 (130 aa).

The protein belongs to the universal ribosomal protein uS8 family. In terms of assembly, part of the 30S ribosomal subunit. Contacts proteins S5 and S12.

One of the primary rRNA binding proteins, it binds directly to 16S rRNA central domain where it helps coordinate assembly of the platform of the 30S subunit. In Ruegeria pomeroyi (strain ATCC 700808 / DSM 15171 / DSS-3) (Silicibacter pomeroyi), this protein is Small ribosomal subunit protein uS8.